Consider the following 612-residue polypeptide: Alpha-glycerophosphate oxidase (612 aa).

Residue 21 to 49 (DLLIIGGGITGAGVALQAAASGLDTGLIE) coordinates FAD. Basic and acidic residues predominate over residues 398-408 (VETSTSEKELD). The segment at 398-418 (VETSTSEKELDPSAVSRGSSF) is disordered.

The protein belongs to the FAD-dependent glycerol-3-phosphate dehydrogenase family. FAD serves as cofactor.

The protein resides in the cytoplasm. The enzyme catalyses sn-glycerol 3-phosphate + O2 = dihydroxyacetone phosphate + H2O2. This is Alpha-glycerophosphate oxidase (glpO) from Streptococcus pyogenes serotype M18 (strain MGAS8232).